We begin with the raw amino-acid sequence, 158 residues long: Ribosome maturation factor RimP (158 aa).

This sequence belongs to the RimP family.

Its subcellular location is the cytoplasm. Functionally, required for maturation of 30S ribosomal subunits. This chain is Ribosome maturation factor RimP, found in Lactobacillus gasseri (strain ATCC 33323 / DSM 20243 / BCRC 14619 / CIP 102991 / JCM 1131 / KCTC 3163 / NCIMB 11718 / NCTC 13722 / AM63).